The sequence spans 274 residues: MQHTSSDTLSENSIKLLQITDTHLFASDEGSLLSVKTLQSFQAVVEQVMARHVEFDYLLATGDISQDHSAASYQRFADGIAPLEKACFWLPGNHDYKPNMSSVLPSPQITTPEQVELNAHWQLILLDSQVVGVPHGRLSDQQLLMLEHHLQASPEKNTLILLHHHPLLVGSAWLDQHTLKDAEAFWQIVERFPMVKGIVCGHVHQDMNVMHKGIRVMATPSTCVQFKPKSDDFALDTVSPGWRELTLHANGEITTQVQRLASGSFLPDFTSSGY.

Residues aspartate 21, histidine 23, aspartate 63, asparagine 93, histidine 163, histidine 202, and histidine 204 each coordinate Fe cation. AMP is bound by residues histidine 23, aspartate 63, and 93-94 (NH). Histidine 204 is an AMP binding site.

This sequence belongs to the cyclic nucleotide phosphodiesterase class-III family. Fe(2+) is required as a cofactor.

The catalysed reaction is 3',5'-cyclic AMP + H2O = AMP + H(+). In terms of biological role, hydrolyzes cAMP to 5'-AMP. Plays an important regulatory role in modulating the intracellular concentration of cAMP, thereby influencing cAMP-dependent processes. This Vibrio vulnificus (strain CMCP6) protein is 3',5'-cyclic adenosine monophosphate phosphodiesterase CpdA.